A 115-amino-acid chain; its full sequence is Phosphoribosyl-ATP pyrophosphatase (115 aa).

This sequence belongs to the PRA-PH family.

The protein localises to the cytoplasm. The enzyme catalyses 1-(5-phospho-beta-D-ribosyl)-ATP + H2O = 1-(5-phospho-beta-D-ribosyl)-5'-AMP + diphosphate + H(+). The protein operates within amino-acid biosynthesis; L-histidine biosynthesis; L-histidine from 5-phospho-alpha-D-ribose 1-diphosphate: step 2/9. This is Phosphoribosyl-ATP pyrophosphatase from Saccharophagus degradans (strain 2-40 / ATCC 43961 / DSM 17024).